The chain runs to 615 residues: DNA mismatch repair protein MutL (615 aa).

The interval 363 to 397 (FAEPAAREPVAPRYTPAPASGSRPAAPWPNAQPGY) is disordered. Residues 364-391 (AEPAAREPVAPRYTPAPASGSRPAAPWP) are compositionally biased toward low complexity.

The protein belongs to the DNA mismatch repair MutL/HexB family.

In terms of biological role, this protein is involved in the repair of mismatches in DNA. It is required for dam-dependent methyl-directed DNA mismatch repair. May act as a 'molecular matchmaker', a protein that promotes the formation of a stable complex between two or more DNA-binding proteins in an ATP-dependent manner without itself being part of a final effector complex. This is DNA mismatch repair protein MutL from Shigella boydii serotype 4 (strain Sb227).